Consider the following 455-residue polypeptide: Tubby-like F-box protein 1 (455 aa).

In terms of domain architecture, F-box spans 54-112; the sequence is ETPWANLPPELLRDVIKRLEESESVWPARRHVVACASVCRSWRDMCKEIVQSPELSGKI. The segment at 386–414 is disordered; it reads QPQPQPQPQPQPQPLTQPQPSGQTDGPDK. Over residues 388–402 the composition is skewed to pro residues; sequence QPQPQPQPQPQPLTQ.

The protein belongs to the TUB family. In terms of tissue distribution, ubiquitous.

The polypeptide is Tubby-like F-box protein 1 (Arabidopsis thaliana (Mouse-ear cress)).